Consider the following 136-residue polypeptide: MARTKQTARKSTGGKAPRKQLATKAARKSAPATGGVKKPHRFRPGTVALREIRKYQKSTELLIRKLPFQRLVREIAQDFKADLRFQSSAVAALQEASESYLVGLFEDTNLCAIHAKRVTIMPKDIQLARRIRGERA.

Positions 1-43 (MARTKQTARKSTGGKAPRKQLATKAARKSAPATGGVKKPHRFR) are disordered. Lysine 5 is subject to N6-methylated lysine. Lysine 10 is subject to N6-acetyllysine; alternate. Lysine 10 carries the post-translational modification N6-methylated lysine; alternate. The residue at position 11 (serine 11) is a Phosphoserine. Residue threonine 12 is modified to Phosphothreonine. The residue at position 15 (lysine 15) is an N6-acetyllysine. 2 positions are modified to N6-acetyllysine; alternate: lysine 19 and lysine 24. N6-methylated lysine; alternate is present on residues lysine 19 and lysine 24. N6-methylated lysine is present on lysine 28. Residue serine 29 is modified to Phosphoserine. N6-methylated lysine is present on lysine 37.

This sequence belongs to the histone H3 family. As to quaternary structure, the nucleosome is a histone octamer containing two molecules each of H2A, H2B, H3 and H4 assembled in one H3-H4 heterotetramer and two H2A-H2B heterodimers. The octamer wraps approximately 147 bp of DNA. Acetylation is generally linked to gene activation. Can be acetylated to form H3K9ac, H3K14ac, H3K18ac and H3K23ac. H3K9ac could compete with H3K9me and prevent gene silencing. H3K9ac is restricted to euchromatin. In terms of processing, methylated to form mainly H3K4me, H3K9me, H3K18me, H3K23me, H3K27me and H3K36me. H3K4me1/2/3, H3K9me3, H3K27me3 and H3K36me1/2/3 are typical marks for euchromatin, whereas heterochromatic chromocenters are enriched in H3K9me1/2 and H3K27me1/2. H2BK143ub1 is probably prerequisite for H3K4me. Post-translationally, can be phosphorylated to form H3S10ph, H3T11ph and H3S28ph. In terms of tissue distribution, expressed in bicellular pollen, root tips, shoot apices, young leaves and ovules.

Its subcellular location is the nucleus. It is found in the nucleolus. The protein localises to the chromosome. Core component of nucleosome. Nucleosomes wrap and compact DNA into chromatin, limiting DNA accessibility to the cellular machineries which require DNA as a template. Histones thereby play a central role in transcription regulation, DNA repair, DNA replication and chromosomal stability. DNA accessibility is regulated via a complex set of post-translational modifications of histones, also called histone code, and nucleosome remodeling. This chain is Histone H3.2 (YAH3), found in Lilium longiflorum (Trumpet lily).